Here is a 59-residue protein sequence, read N- to C-terminus: Large ribosomal subunit protein uL30 (59 aa).

The protein belongs to the universal ribosomal protein uL30 family. Part of the 50S ribosomal subunit.

This Aeromonas hydrophila subsp. hydrophila (strain ATCC 7966 / DSM 30187 / BCRC 13018 / CCUG 14551 / JCM 1027 / KCTC 2358 / NCIMB 9240 / NCTC 8049) protein is Large ribosomal subunit protein uL30.